The sequence spans 1122 residues: Cytosolic carboxypeptidase 4 (1122 aa).

Residues 287 to 338 (PGSTSSELPLNLTEEDFDDDGDEEMDKDSDVEAVKEDDDLETDLSKLSSKPG) are disordered. The span at 299-313 (TEEDFDDDGDEEMDK) shows a compositional bias: acidic residues. In terms of domain architecture, Peptidase M14 spans 731–1021 (YPYTYSTLMT…MYCLGLLILE (291 aa)). Residues histidine 803, glutamate 806, and histidine 900 each coordinate Zn(2+). The Proton donor/acceptor role is filled by glutamate 985. The interval 1099 to 1122 (CALNKDEEEEEKEEGTGWRRRSVT) is disordered.

It belongs to the peptidase M14 family. As to quaternary structure, interacts with MYLK. Interacts with TCF4. Zn(2+) serves as cofactor. As to expression, widely expressed at low level. Expressed in eye, muscle, pituitary, testis and to a lower extent in brain.

The protein resides in the cytoplasm. Its subcellular location is the cytosol. The enzyme catalyses (L-glutamyl)(n+1)-gamma-L-glutamyl-L-glutamyl-[protein] + H2O = (L-glutamyl)(n)-gamma-L-glutamyl-L-glutamyl-[protein] + L-glutamate. The catalysed reaction is C-terminal L-alpha-aminoacyl-L-glutamyl-L-glutamyl-[tubulin] + H2O = C-terminal L-alpha-aminoacyl-L-glutamyl-[tubulin] + L-glutamate. In terms of biological role, metallocarboxypeptidase that mediates deglutamylation of tubulin and non-tubulin target proteins. Catalyzes the removal of polyglutamate side chains present on the gamma-carboxyl group of glutamate residues within the C-terminal tail of tubulin protein. Specifically cleaves tubulin long-side-chains, while it is not able to remove the branching point glutamate. Also catalyzes the removal of polyglutamate residues from the carboxy-terminus of non-tubulin proteins such as MYLK. This Mus musculus (Mouse) protein is Cytosolic carboxypeptidase 4.